A 394-amino-acid chain; its full sequence is Elongation factor Tu 1 (394 aa).

In terms of domain architecture, tr-type G spans 10 to 204; it reads KPHVNVGTIG…ALDSYIPEPE (195 aa). The interval 19 to 26 is G1; sequence GHVDHGKT. GTP is bound at residue 19–26; it reads GHVDHGKT. Position 26 (Thr-26) interacts with Mg(2+). The G2 stretch occupies residues 60-64; sequence GITIN. The interval 81 to 84 is G3; sequence DCPG. GTP-binding positions include 81–85 and 136–139; these read DCPGH and NKCD. Residues 136 to 139 form a G4 region; it reads NKCD. The G5 stretch occupies residues 174–176; the sequence is SAL.

The protein belongs to the TRAFAC class translation factor GTPase superfamily. Classic translation factor GTPase family. EF-Tu/EF-1A subfamily. In terms of assembly, monomer.

Its subcellular location is the cytoplasm. It carries out the reaction GTP + H2O = GDP + phosphate + H(+). Functionally, GTP hydrolase that promotes the GTP-dependent binding of aminoacyl-tRNA to the A-site of ribosomes during protein biosynthesis. This is Elongation factor Tu 1 from Shewanella oneidensis (strain ATCC 700550 / JCM 31522 / CIP 106686 / LMG 19005 / NCIMB 14063 / MR-1).